A 160-amino-acid chain; its full sequence is MTELCPVYAPFFGAIGCASAIIFTSLGAAYGTAKSGVGICATCVLRPDLLFKNIVPVIMAGIIAIYGLVVSVLVCYSLGQKQALYTGFIQLGAGLSVGLSGLAAGFAIGIVGDAGVRGSSQQPRLFVGMILILIFAEVLGLYGLIVALLLNSRATQDVVC.

Residues 1–8 (MTELCPVY) lie on the Vacuolar side of the membrane. The chain crosses the membrane as a helical span at residues 9–31 (APFFGAIGCASAIIFTSLGAAYG). Topologically, residues 32 to 53 (TAKSGVGICATCVLRPDLLFKN) are cytoplasmic. A helical transmembrane segment spans residues 54–74 (IVPVIMAGIIAIYGLVVSVLV). At 75 to 90 (CYSLGQKQALYTGFIQ) the chain is on the vacuolar side. Residues 91-112 (LGAGLSVGLSGLAAGFAIGIVG) form a helical membrane-spanning segment. Over 113 to 124 (DAGVRGSSQQPR) the chain is Cytoplasmic. Residues 125–150 (LFVGMILILIFAEVLGLYGLIVALLL) form a helical membrane-spanning segment. The Vacuolar portion of the chain corresponds to 151–160 (NSRATQDVVC).

The protein belongs to the V-ATPase proteolipid subunit family. In terms of assembly, V-ATPase is a heteromultimeric enzyme composed of a peripheral catalytic V1 complex (components A to H) attached to an integral membrane V0 proton pore complex (components: a, c, c', c'', d, e, f and VOA1). The decameric c-ring forms the proton-conducting pore, and is composed of eight proteolipid subunits c, one subunit c' and one subunit c''.

The protein resides in the vacuole membrane. In terms of biological role, proton-conducting pore forming subunit of the V0 complex of vacuolar(H+)-ATPase (V-ATPase), a multisubunit enzyme composed of a peripheral complex (V1) that hydrolyzes ATP and a membrane integral complex (V0) that translocates protons. V-ATPase is responsible for acidifying and maintaining the pH of intracellular compartments. The chain is V-type proton ATPase subunit c (VMA3) from Saccharomyces cerevisiae (strain ATCC 204508 / S288c) (Baker's yeast).